We begin with the raw amino-acid sequence, 327 residues long: G-protein coupled receptor 55 (327 aa).

Over 1–20 (MSQPERDNCSFDSVDKLTRT) the chain is Extracellular. Asn-8 carries an N-linked (GlcNAc...) asparagine glycan. A helical membrane pass occupies residues 21–41 (LQLAVHIPTFLLGLVLNLLAI). Topologically, residues 42–57 (RGFSAFLKKRKLDYIA) are cytoplasmic. The chain crosses the membrane as a helical span at residues 58 to 78 (TSIYMINLAVFDLLLVLSLPF). Over 79 to 93 (KMVLPQVESPLPSFC) the chain is Extracellular. The helical transmembrane segment at 94-114 (TLVECLYFISMYGSVFTICFI) threads the bilayer. The Cytoplasmic portion of the chain corresponds to 115–136 (SLDRFLAIQYPILASHLRSPRK). A helical membrane pass occupies residues 137–157 (TFGICCIIWMLVWIGSIPIYT). Residues 158–179 (FHREVERYKCFHNMSDVTWSAS) lie on the Extracellular side of the membrane. An N-linked (GlcNAc...) asparagine glycan is attached at Asn-170. A helical transmembrane segment spans residues 180–200 (VFFPLEIFGFLLPMGIMGFCS). Residues 201-239 (YRSIHILLRRPDSTEDWVQQRDTKGWVQKRACIWTIATN) are Cytoplasmic-facing. The chain crosses the membrane as a helical span at residues 240–260 (LVIFVVSFLPVHLGFFLQYLV). Residues 261–279 (RNRFILDCRMKQGISLFLQ) lie on the Extracellular side of the membrane. A helical transmembrane segment spans residues 280–300 (LSLCFSNINCCLDVFCYYFVI). The Cytoplasmic segment spans residues 301 to 327 (KEFRMRIKAHRPSTIKLVNQDTMVSRG).

It belongs to the G-protein coupled receptor 1 family. As to expression, highly expressed in splenic plasma cells.

It localises to the cell membrane. Its function is as follows. G-protein coupled receptor that binds to several ligands including 2-arachidonoyl lysophosphatidylinositol or lysophosphatidylglucoside with high affinity, leading to rapid and transient activation of numerous intracellular signaling pathways. Induces the Ca(2+) release from intracellular stores via ERK, the heterotrimeric G protein GNA13 and RHOA leading to morphological changes including cell rounding and stress fiber formation. In macrophages, acts downstream of lysophosphatidylglucoside to inhibit the translocation of the phospholipid-transporting ABCA1 to plasma membrane and subsequent cholesterol efflux leading to lipid accumulation and foam cell formation. May be involved in hyperalgesia associated with inflammatory and neuropathic pain. In Mus musculus (Mouse), this protein is G-protein coupled receptor 55 (Gpr55).